We begin with the raw amino-acid sequence, 35 residues long: Cycloamanide F proprotein (35 aa).

A propeptide spanning residues 1–10 (MSDINATRLP) is cleaved from the precursor. Residues 11 to 18 (IVGILGLP) constitute a cross-link (cyclopeptide (Ile-Pro)). The propeptide occupies 19 to 35 (CIGDDVNSTLTHGEDLC).

Belongs to the MSDIN fungal toxin family. In terms of processing, processed by the macrocyclase-peptidase enzyme POPB to yield a cyclic decapeptide. POPB first removes 10 residues from the N-terminus. Conformational trapping of the remaining peptide forces the enzyme to release this intermediate rather than proceed to macrocyclization. The enzyme rebinds the remaining peptide in a different conformation and catalyzes macrocyclization of the N-terminal 8 residues.

Its function is as follows. Cyclic octapeptide that belongs to the MSDIN-like toxin family responsible for a large number of food poisoning cases and deaths. Cycloaminide E is structurally related to other cycloamanides that are non-toxic to mammals but show immunosuppressive activity. The sequence is that of Cycloamanide F proprotein from Amanita phalloides (Death cap).